Consider the following 274-residue polypeptide: Kit ligand (274 aa).

The signal sequence occupies residues methionine 1 to threonine 25. Residues lysine 26–glutamine 215 are Extracellular-facing. Disulfide bonds link cysteine 29-cysteine 114 and cysteine 68-cysteine 164. N-linked (GlcNAc...) asparagine glycans are attached at residues asparagine 90, asparagine 97, asparagine 145, and asparagine 196. Residues tryptophan 216–tryptophan 238 traverse the membrane as a helical segment. At lysine 239 to valine 274 the chain is on the cytoplasmic side.

Belongs to the SCF family. As to quaternary structure, homodimer, non-covalently linked. In terms of processing, a soluble form is produced by proteolytic processing of the extracellular domain.

The protein resides in the cytoplasm. The protein localises to the cytoskeleton. It is found in the cell membrane. It localises to the cell projection. Its subcellular location is the lamellipodium. The protein resides in the filopodium. The protein localises to the secreted. Stimulates the proliferation of mast cells. Able to augment the proliferation of both myeloid and lymphoid hematopoietic progenitors in bone marrow culture. Also mediates cell-cell adhesion. Acts synergistically with other cytokines, probably interleukins. The protein is Kit ligand (KITLG) of Canis lupus familiaris (Dog).